The sequence spans 342 residues: Uroporphyrinogen decarboxylase (342 aa).

Substrate-binding positions include Arg-22 to Arg-26, Phe-42, Asp-72, Tyr-146, Ser-201, and His-317.

This sequence belongs to the uroporphyrinogen decarboxylase family. As to quaternary structure, homodimer.

The protein localises to the cytoplasm. It carries out the reaction uroporphyrinogen III + 4 H(+) = coproporphyrinogen III + 4 CO2. Its pathway is porphyrin-containing compound metabolism; protoporphyrin-IX biosynthesis; coproporphyrinogen-III from 5-aminolevulinate: step 4/4. Catalyzes the decarboxylation of four acetate groups of uroporphyrinogen-III to yield coproporphyrinogen-III. This Orientia tsutsugamushi (strain Ikeda) (Rickettsia tsutsugamushi) protein is Uroporphyrinogen decarboxylase.